We begin with the raw amino-acid sequence, 237 residues long: MGKRIISQNRGKGTPTYRAPSHRYKTDAKLLRFKDEVVAAKVIDIQHDSARNGPVALVKLPDGSETYILAVEGLGTGDVVYAGDNVEIASGNITYLKNIPEGTPVCNIEAQPGDGGKFIRASGTFGFVVSREADKVLVQMPSGKQKWFHPNCRAMIGVVAGGGRTDKPFVKAGKKYHKMKSKAAKWPRVRGVAMNAVDHPFGGGKHQHVGKPKTVSRNAPPGRKVGSIAARRTGVRR.

Residues 1–11 (MGKRIISQNRG) are compositionally biased toward polar residues. 2 disordered regions span residues 1-20 (MGKR…YRAP) and 201-237 (FGGG…GVRR).

The protein belongs to the universal ribosomal protein uL2 family. As to quaternary structure, part of the 50S ribosomal subunit. Forms a bridge to the 30S subunit in the 70S ribosome.

In terms of biological role, one of the primary rRNA binding proteins. Required for association of the 30S and 50S subunits to form the 70S ribosome, for tRNA binding and peptide bond formation. It has been suggested to have peptidyltransferase activity; this is somewhat controversial. Makes several contacts with the 16S rRNA in the 70S ribosome. The sequence is that of Large ribosomal subunit protein uL2 from Archaeoglobus fulgidus (strain ATCC 49558 / DSM 4304 / JCM 9628 / NBRC 100126 / VC-16).